The primary structure comprises 180 residues: UPF0690 protein C1orf52 homolog (180 aa).

Disordered stretches follow at residues 1 to 66 (MAAE…SVTR) and 96 to 180 (KIWK…KKKK). Residues 48–61 (KQAEKRLPGPDELF) are compositionally biased toward basic and acidic residues. T65 is subject to Phosphothreonine. Y130 is modified (phosphotyrosine). Acidic residues predominate over residues 149–160 (EGEETVESDDDK). At S156 the chain carries Phosphoserine. The span at 161-180 (DERASKIRRVEPGEAAKKKK) shows a compositional bias: basic and acidic residues.

Belongs to the UPF0690 family.

The protein is UPF0690 protein C1orf52 homolog of Mus musculus (Mouse).